A 305-amino-acid polypeptide reads, in one-letter code: Beta-carotene 3-hydroxylase, chloroplastic (305 aa).

A chloroplast-targeting transit peptide spans 1-41; it reads MAFAMSSSLTLFQYQSFGKKPFFSRRRDFAGCSMMNPLVAR. 2 helical membrane passes run 98 to 118 and 129 to 149; these read YLVA…AAVY and AVPL…AVGM. Residues 146 to 272 enclose the Fatty acid hydroxylase domain; it reads AVGMEYWARW…KFNGVPYGLF (127 aa). The Histidine box-1 signature appears at 157–162; sequence HRALWH. The Histidine box-2 motif lies at 169–173; that stretch reads HESHH. 2 consecutive transmembrane segments (helical) span residues 184–204 and 207–227; these read DVFA…GFFH and FFSG…MAYM. Positions 230–235 match the Histidine box-3 motif; sequence HDGLVH. Positions 256–260 match the Histidine box-4 motif; it reads HQIHH.

This sequence belongs to the sterol desaturase family. Homodimer. Expressed in flower buds and lips. Detected in roots and leaves.

The protein localises to the plastid. The protein resides in the chloroplast membrane. The catalysed reaction is all-trans-beta-carotene + 4 reduced [2Fe-2S]-[ferredoxin] + 2 O2 + 4 H(+) = all-trans-zeaxanthin + 4 oxidized [2Fe-2S]-[ferredoxin] + 2 H2O. In terms of biological role, nonheme diiron monooxygenase involved in the biosynthesis of xanthophylls. Specific for beta-ring hydroxylations of beta-carotene. Uses ferredoxin as an electron donor. This Oncidium hybrid cultivar (Orchid) protein is Beta-carotene 3-hydroxylase, chloroplastic (BHY).